A 563-amino-acid polypeptide reads, in one-letter code: Inositol-3-phosphate synthase 1-B (563 aa).

This sequence belongs to the myo-inositol 1-phosphate synthase family. NAD(+) serves as cofactor.

Its subcellular location is the cytoplasm. The catalysed reaction is D-glucose 6-phosphate = 1D-myo-inositol 3-phosphate. It functions in the pathway polyol metabolism; myo-inositol biosynthesis; myo-inositol from D-glucose 6-phosphate: step 1/2. In terms of biological role, key enzyme in myo-inositol biosynthesis pathway that catalyzes the conversion of glucose 6-phosphate to 1-myo-inositol 1-phosphate in a NAD-dependent manner. Rate-limiting enzyme in the synthesis of all inositol-containing compounds. The chain is Inositol-3-phosphate synthase 1-B (isyna1-b) from Xenopus laevis (African clawed frog).